The following is a 316-amino-acid chain: NAC domain-containing protein 2 (316 aa).

One can recognise an NAC domain in the interval Leu17–Lys170. A DNA-binding region spans residues Leu114–Lys176. Residues Glu185–Ser210 form a disordered region. A compositionally biased stretch (polar residues) spans Met190–His200.

In terms of assembly, forms homodimer. Interacts with NAC071. Expressed in roots and stamens.

It localises to the nucleus. Functionally, transcription factor that possesses transactivation activity. Transcription activator involved in response to abiotic stresses. Plays a positive role during dehydration and salt stress. Binds specifically to the 5'-CATGTG-3' motif found in promoters of stress-responsive genes. This Oryza sativa subsp. japonica (Rice) protein is NAC domain-containing protein 2.